The primary structure comprises 258 residues: MKRINKTAEDQFLINFKAQNPNGTWDEFRNHEQGILYKRLKQHICNDQMYLCAYCEIDLDRENEHEIKVEHFKSKSGSLPGGSNWHLEWSNLLAVCLGGTNTGDDFELPANLSCDSYKSHYEDKNKINDKDWTGKILLPLTLPDAHNFFTFEKVTGKLLPNESYCNTISIDGKPAAETLSIVTKTIEVLNLNCSRLNNARRKLLFHFNNCARERNLRKLHNLLLQWNQGEPKFFQTTRDIIIRDDRICQGLLNGTIRY.

In terms of biological role, putative HNH endonuclease component of antiviral defense system retron Ec83, composed of a non-coding RNA (ncRNA), a reverse transcriptase (RT), a probable ATPase and this protein. Expression of retron Ec78 confers protection against bacteriophage T2, T4 and T6. At multiplicity of infection (MOI) of 0.02 cultures slow growth when infected with T4 but do not collapse, at MOI 2 cultures enter growth stasis. This Escherichia coli protein is Retron Ec83 putative HNH endonuclease.